Reading from the N-terminus, the 310-residue chain is MASNNPHDNLSDQTPSDDFFEQILGLPNFSASSAAGLSGVDGGLGGGAPPMMLQLGSGEEGSHMGGLGGSGPTGFHNQMFPLGLSLDQGKGPGFLRPEGGHGSGKRFSDDVVDNRCSSMKPVFHGQPMQQPPPSAPHQPTSIRPRVRARRGQATDPHSIAERLRRERIAERIRALQELVPTVNKTDRAAMIDEIVDYVKFLRLQVKVLSMSRLGGAGAVAPLVTDMPLSSSVEDETGEGGRTPQPAWEKWSNDGTERQVAKLMEENVGAAMQLLQSKALCMMPISLAMAIYHSQPPDTSSVVKPENNPPQ.

Disordered stretches follow at residues 124–156 (HGQPMQQPPPSAPHQPTSIRPRVRARRGQATDP) and 229–253 (SSSVEDETGEGGRTPQPAWEKWSND). The bHLH domain occupies 152–201 (QATDPHSIAERLRRERIAERIRALQELVPTVNKTDRAAMIDEIVDYVKFL).

Homodimer. Expressed constitutively in roots, leaves, stems, and flowers.

Its subcellular location is the nucleus. In terms of biological role, required for ovule fertilization. The sequence is that of Transcription factor UNE12 (UNE12) from Arabidopsis thaliana (Mouse-ear cress).